Here is a 223-residue protein sequence, read N- to C-terminus: Ribose-5-phosphate isomerase A (223 aa).

Substrate is bound by residues threonine 32–threonine 35, aspartate 85–aspartate 88, and lysine 98–glycine 101. Residue glutamate 107 is the Proton acceptor of the active site. Lysine 125 is a binding site for substrate.

Belongs to the ribose 5-phosphate isomerase family. Homodimer.

The enzyme catalyses aldehydo-D-ribose 5-phosphate = D-ribulose 5-phosphate. Its pathway is carbohydrate degradation; pentose phosphate pathway; D-ribose 5-phosphate from D-ribulose 5-phosphate (non-oxidative stage): step 1/1. Catalyzes the reversible conversion of ribose-5-phosphate to ribulose 5-phosphate. In Stutzerimonas stutzeri (strain A1501) (Pseudomonas stutzeri), this protein is Ribose-5-phosphate isomerase A.